Here is a 368-residue protein sequence, read N- to C-terminus: DNA replication and repair protein RecF (368 aa).

30–37 (GNNAQGKT) is an ATP binding site.

It belongs to the RecF family.

Its subcellular location is the cytoplasm. The RecF protein is involved in DNA metabolism; it is required for DNA replication and normal SOS inducibility. RecF binds preferentially to single-stranded, linear DNA. It also seems to bind ATP. This chain is DNA replication and repair protein RecF, found in Streptococcus pyogenes serotype M12 (strain MGAS9429).